Reading from the N-terminus, the 126-residue chain is Holo-[acyl-carrier-protein] synthase (126 aa).

Residues D8 and E57 each coordinate Mg(2+).

The protein belongs to the P-Pant transferase superfamily. AcpS family. Mg(2+) serves as cofactor.

It is found in the cytoplasm. The catalysed reaction is apo-[ACP] + CoA = holo-[ACP] + adenosine 3',5'-bisphosphate + H(+). Functionally, transfers the 4'-phosphopantetheine moiety from coenzyme A to a Ser of acyl-carrier-protein. The sequence is that of Holo-[acyl-carrier-protein] synthase from Vibrio cholerae serotype O1 (strain ATCC 39315 / El Tor Inaba N16961).